The chain runs to 377 residues: Tryptophan 2,3-dioxygenase (377 aa).

Substrate is bound by residues 57–61 (FIITH) and arginine 128. Residue histidine 313 coordinates heme. Residue threonine 328 coordinates substrate.

The protein belongs to the tryptophan 2,3-dioxygenase family. As to quaternary structure, homotetramer. Dimer of dimers. Heme serves as cofactor.

It carries out the reaction L-tryptophan + O2 = N-formyl-L-kynurenine. Its pathway is amino-acid degradation; L-tryptophan degradation via kynurenine pathway; L-kynurenine from L-tryptophan: step 1/2. It functions in the pathway pigment biosynthesis; ommochrome biosynthesis. Functionally, heme-dependent dioxygenase that catalyzes the oxidative cleavage of the L-tryptophan (L-Trp) pyrrole ring and converts L-tryptophan to N-formyl-L-kynurenine. Catalyzes the oxidative cleavage of the indole moiety. This Drosophila grimshawi (Hawaiian fruit fly) protein is Tryptophan 2,3-dioxygenase.